A 166-amino-acid chain; its full sequence is MSNIEKQVGELQEKLIAVNRVSKTVKGGRIMSFTALTVVGDGNGRVGFGYGKAREVPAAIQKAMEKARRNMINVALNEGTLQHPVKGVHTGSRVFMQPASEGTGIIAGGAMRAVLEVAGVRNVLSKAYGSTNPINVVRATIDALANMKSPEMVAAKRGKTVDEILG.

The S5 DRBM domain occupies 11–74; the sequence is LQEKLIAVNR…EKARRNMINV (64 aa).

The protein belongs to the universal ribosomal protein uS5 family. Part of the 30S ribosomal subunit. Contacts proteins S4 and S8.

With S4 and S12 plays an important role in translational accuracy. In terms of biological role, located at the back of the 30S subunit body where it stabilizes the conformation of the head with respect to the body. The chain is Small ribosomal subunit protein uS5 from Haemophilus influenzae (strain 86-028NP).